We begin with the raw amino-acid sequence, 222 residues long: Large ribosomal subunit protein uL4 (222 aa).

It belongs to the universal ribosomal protein uL4 family. In terms of assembly, part of the 50S ribosomal subunit.

Functionally, one of the primary rRNA binding proteins, this protein initially binds near the 5'-end of the 23S rRNA. It is important during the early stages of 50S assembly. It makes multiple contacts with different domains of the 23S rRNA in the assembled 50S subunit and ribosome. Its function is as follows. Forms part of the polypeptide exit tunnel. The sequence is that of Large ribosomal subunit protein uL4 from Acidobacterium capsulatum (strain ATCC 51196 / DSM 11244 / BCRC 80197 / JCM 7670 / NBRC 15755 / NCIMB 13165 / 161).